The chain runs to 309 residues: MLSSTCTAAVRGLSTTAQLSKINNVTIIGAGLMGSGIAQVSANAKLNVTVVDSNQSALEKAQQGIANSLKRVAKKKHADDAAAQTALVSSVLDRIKMSTNVSDSVKDADLVIEAIVENIDIKRKLFAEVEVAAKPTTLITTNTSSLRLADIGLNLKDKSRFGGLHFFNPVPMMKLLEVVRHTETSDATFNQLVDYGKTVGKTTVACKDTPGFIVNRLLVPYMFEALRLYERGDASMEDIDVAMKLGAGYPMGPFELSDYVGLDTCKFIMDGWHAQYPEEVAFTPSPLLNSLVDSGKNGRKSGEGFYKYK.

The protein belongs to the 3-hydroxyacyl-CoA dehydrogenase family. Homodimer.

The protein localises to the mitochondrion matrix. It carries out the reaction a (3S)-3-hydroxyacyl-CoA + NAD(+) = a 3-oxoacyl-CoA + NADH + H(+). Its pathway is lipid metabolism; fatty acid beta-oxidation. This chain is Probable 3-hydroxyacyl-CoA dehydrogenase B0272.3, found in Caenorhabditis elegans.